A 352-amino-acid chain; its full sequence is N-terminal EF-hand calcium-binding protein 1 (352 aa).

Serine 4 is modified (phosphoserine). EF-hand domains are found at residues 26 to 61 and 60 to 95; these read KGMSIFLDILRRADKNDDGKLSFEEFKAYFADGVLS and LSGEELHELFHTIDTHNTNNLDTEELCEYFSQHLGE. Residues aspartate 39, asparagine 41, aspartate 43, lysine 45, and glutamate 50 each coordinate Ca(2+). A coiled-coil region spans residues 135–163; that stretch reads LLKETLNQLQSLQNSLECAMETTEEQTRQ. The tract at residues 180 to 202 is disordered; that stretch reads GKRSSRRVQRHNSFSPNSPQFNV. Positions 190-202 are enriched in polar residues; it reads HNSFSPNSPQFNV. Serine 192 and serine 197 each carry phosphoserine. Residues 209 to 275 adopt a coiled-coil conformation; the sequence is EEDNQWMTQI…EEFQLALKHY (67 aa). Positions 252 to 340 constitute an ABM domain; that stretch reads MLVQRQMSVI…LETPELTSTM (89 aa).

In terms of assembly, interacts with STX1. May interact with CPNE6.

The protein localises to the cytoplasm. This chain is N-terminal EF-hand calcium-binding protein 1 (NECAB1), found in Pongo abelii (Sumatran orangutan).